A 251-amino-acid polypeptide reads, in one-letter code: Putative deaminase AgaI (251 aa).

Asp86 functions as the Proton acceptor; for enolization step in the catalytic mechanism. The For ring-opening step role is filled by Asn154. Residue His156 is the Proton acceptor; for ring-opening step of the active site. Glu161 acts as the For ring-opening step in catalysis.

It belongs to the glucosamine/galactosamine-6-phosphate isomerase family.

This Escherichia coli (strain K12) protein is Putative deaminase AgaI (agaI).